Here is a 122-residue protein sequence, read N- to C-terminus: Large ribosomal subunit protein uL24 (122 aa).

The protein belongs to the universal ribosomal protein uL24 family. In terms of assembly, part of the 50S ribosomal subunit.

Its function is as follows. One of two assembly initiator proteins, it binds directly to the 5'-end of the 23S rRNA, where it nucleates assembly of the 50S subunit. In terms of biological role, one of the proteins that surrounds the polypeptide exit tunnel on the outside of the subunit. This Trichodesmium erythraeum (strain IMS101) protein is Large ribosomal subunit protein uL24.